The following is a 278-amino-acid chain: Ribosomal RNA small subunit methyltransferase J (278 aa).

S-adenosyl-L-methionine-binding positions include 143–144 and Asp-197; that span reads ER.

The protein belongs to the methyltransferase superfamily. RsmJ family.

The protein localises to the cytoplasm. The enzyme catalyses guanosine(1516) in 16S rRNA + S-adenosyl-L-methionine = N(2)-methylguanosine(1516) in 16S rRNA + S-adenosyl-L-homocysteine + H(+). Specifically methylates the guanosine in position 1516 of 16S rRNA. This Marinobacter nauticus (strain ATCC 700491 / DSM 11845 / VT8) (Marinobacter aquaeolei) protein is Ribosomal RNA small subunit methyltransferase J.